A 441-amino-acid chain; its full sequence is Glutamate--tRNA ligase 1 (441 aa).

The 'HIGH' region signature appears at 8-18; that stretch reads PSPTGYIHIGN. A 'KMSKS' region motif is present at residues 239–243; sequence ALSKR. Lys-242 provides a ligand contact to ATP.

The protein belongs to the class-I aminoacyl-tRNA synthetase family. Glutamate--tRNA ligase type 1 subfamily. Monomer.

Its subcellular location is the cytoplasm. It carries out the reaction tRNA(Glu) + L-glutamate + ATP = L-glutamyl-tRNA(Glu) + AMP + diphosphate. Functionally, catalyzes the attachment of glutamate to tRNA(Glu) in a two-step reaction: glutamate is first activated by ATP to form Glu-AMP and then transferred to the acceptor end of tRNA(Glu). The sequence is that of Glutamate--tRNA ligase 1 from Roseobacter denitrificans (strain ATCC 33942 / OCh 114) (Erythrobacter sp. (strain OCh 114)).